Reading from the N-terminus, the 163-residue chain is Xanthine-guanine phosphoribosyltransferase (163 aa).

5-phospho-alpha-D-ribose 1-diphosphate is bound by residues 43-44 (RG) and 95-103 (DDLADTGGT). Asp-96 contacts Mg(2+). Guanine is bound by residues Asp-99 and Ile-142. 2 residues coordinate xanthine: Asp-99 and Ile-142. GMP contacts are provided by residues 99–103 (DTGGT) and 141–142 (WI).

The protein belongs to the purine/pyrimidine phosphoribosyltransferase family. XGPT subfamily. In terms of assembly, homotetramer. The cofactor is Mg(2+).

The protein localises to the cell inner membrane. The enzyme catalyses GMP + diphosphate = guanine + 5-phospho-alpha-D-ribose 1-diphosphate. It catalyses the reaction XMP + diphosphate = xanthine + 5-phospho-alpha-D-ribose 1-diphosphate. It carries out the reaction IMP + diphosphate = hypoxanthine + 5-phospho-alpha-D-ribose 1-diphosphate. It functions in the pathway purine metabolism; GMP biosynthesis via salvage pathway; GMP from guanine: step 1/1. Its pathway is purine metabolism; XMP biosynthesis via salvage pathway; XMP from xanthine: step 1/1. Purine salvage pathway enzyme that catalyzes the transfer of the ribosyl-5-phosphate group from 5-phospho-alpha-D-ribose 1-diphosphate (PRPP) to the N9 position of the 6-oxopurines guanine and xanthine to form the corresponding ribonucleotides GMP (guanosine 5'-monophosphate) and XMP (xanthosine 5'-monophosphate), with the release of PPi. To a lesser extent, also acts on hypoxanthine. The sequence is that of Xanthine-guanine phosphoribosyltransferase from Nitratidesulfovibrio vulgaris (strain ATCC 29579 / DSM 644 / CCUG 34227 / NCIMB 8303 / VKM B-1760 / Hildenborough) (Desulfovibrio vulgaris).